Consider the following 1449-residue polypeptide: VWFA and cache domain-containing protein CG16868 (1449 aa).

A signal peptide spans 1–23 (MWPNSNLNAVLLILAVLACPTSS). Topologically, residues 24-1220 (QHVPLAMANS…NPQREQHAYS (1197 aa)) are extracellular. Residues N32, N112, N153, N407, N447, and N497 are each glycosylated (N-linked (GlcNAc...) asparagine). The 222-residue stretch at 320–541 (FVLFLIDVGS…TSLPQTSSRI (222 aa)) folds into the VWFA domain. Residues 557–639 (VHPPVVDADS…PRPLIQRETS (83 aa)) enclose the Cache 1 domain. 3 N-linked (GlcNAc...) asparagine glycosylation sites follow: N649, N668, and N707. In terms of domain architecture, Cache 2 spans 889 to 934 (TAPYLDAGGAGYIITIAHTIFEGKAHALHSAQQDRPVAVVALDVPY). 4 N-linked (GlcNAc...) asparagine glycosylation sites follow: N1015, N1025, N1059, and N1111. Residues 1221 to 1241 (AFGPLGGAIVVLVMVIGFAIY) traverse the membrane as a helical segment. The Cytoplasmic portion of the chain corresponds to 1242-1449 (CYRHNLDAQT…VHRHMETAES (208 aa)). Disordered regions lie at residues 1307–1339 (YHVS…SSDQ) and 1352–1416 (DKRH…GGSV). Residues 1359–1369 (DTMSISTSISS) are compositionally biased toward low complexity. Residues 1370–1392 (PTNRQQSSSQPNTHPYLSNQPTS) are compositionally biased toward polar residues.

It belongs to the calcium channel subunit alpha-2/delta family.

The protein localises to the membrane. This chain is VWFA and cache domain-containing protein CG16868, found in Drosophila melanogaster (Fruit fly).